A 76-amino-acid polypeptide reads, in one-letter code: MSKFFRRRKFCKFTAEGVKEIDYKDLNTLRQYLTENGKIVPSRVTGTKSKYQRQLATAVKRARFLALIPYTDNHDV.

It belongs to the bacterial ribosomal protein bS18 family. In terms of assembly, part of the 30S ribosomal subunit. Forms a tight heterodimer with protein bS6.

Its function is as follows. Binds as a heterodimer with protein bS6 to the central domain of the 16S rRNA, where it helps stabilize the platform of the 30S subunit. The polypeptide is Small ribosomal subunit protein bS18 (Xanthomonas euvesicatoria pv. vesicatoria (strain 85-10) (Xanthomonas campestris pv. vesicatoria)).